We begin with the raw amino-acid sequence, 1392 residues long: ATP-dependent helicase/nuclease subunit A (1392 aa).

Positions 3–489 (NPKWTPAQQA…IDLNQNFRSR (487 aa)) constitute a UvrD-like helicase ATP-binding domain. An ATP-binding site is contributed by 24 to 31 (AAAGSGKT). Disordered regions lie at residues 291 to 319 (RGSK…KARD), 555 to 594 (KRGA…LEEA), and 1051 to 1126 (GPVQ…LDTK). Composition is skewed to basic and acidic residues over residues 305 to 319 (ENSK…KARD) and 567 to 583 (SPAK…REPE). The region spanning 556–886 (RGAEDAATEV…RFITVHSSKG (331 aa)) is the UvrD-like helicase C-terminal domain. Residues 584 to 594 (SGDDESSLEEA) show a composition bias toward acidic residues. The segment covering 1088 to 1113 (ASGKTEIPGETKNSEETKTSEDKKNL) has biased composition (basic and acidic residues).

This sequence belongs to the helicase family. AddA subfamily. As to quaternary structure, heterodimer of AddA and AddB/RexB. The cofactor is Mg(2+).

It carries out the reaction Couples ATP hydrolysis with the unwinding of duplex DNA by translocating in the 3'-5' direction.. The catalysed reaction is ATP + H2O = ADP + phosphate + H(+). Functionally, the heterodimer acts as both an ATP-dependent DNA helicase and an ATP-dependent, dual-direction single-stranded exonuclease. Recognizes the chi site generating a DNA molecule suitable for the initiation of homologous recombination. The AddA nuclease domain is required for chi fragment generation; this subunit has the helicase and 3' -&gt; 5' nuclease activities. This Desulfitobacterium hafniense (strain DSM 10664 / DCB-2) protein is ATP-dependent helicase/nuclease subunit A.